An 82-amino-acid polypeptide reads, in one-letter code: Cytochrome b559 subunit alpha (82 aa).

Residues 22–36 form a helical membrane-spanning segment; sequence IIHAVTLPAIFIAGF. H24 contributes to the heme binding site.

This sequence belongs to the PsbE/PsbF family. Heterodimer of an alpha subunit and a beta subunit. PSII is composed of 1 copy each of membrane proteins PsbA, PsbB, PsbC, PsbD, PsbE, PsbF, PsbH, PsbI, PsbJ, PsbK, PsbL, PsbM, PsbT, PsbX, PsbY, Psb30/Ycf12, peripheral proteins PsbO, CyanoQ (PsbQ), PsbU, PsbV and a large number of cofactors. It forms dimeric complexes. Requires heme b as cofactor.

The protein resides in the cellular thylakoid membrane. In terms of biological role, this b-type cytochrome is tightly associated with the reaction center of photosystem II (PSII). PSII is a light-driven water:plastoquinone oxidoreductase that uses light energy to abstract electrons from H(2)O, generating O(2) and a proton gradient subsequently used for ATP formation. It consists of a core antenna complex that captures photons, and an electron transfer chain that converts photonic excitation into a charge separation. The chain is Cytochrome b559 subunit alpha from Prochlorococcus marinus (strain MIT 9211).